The chain runs to 868 residues: Sporulation-specific protein 75 (868 aa).

At Met1 to Gly34 the chain is on the extracellular side. The N-linked (GlcNAc...) asparagine glycan is linked to Asn2. The helical transmembrane segment at Phe35–Ile55 threads the bilayer. Topologically, residues Leu56–Lys127 are cytoplasmic. Residues Leu128–His148 form a helical membrane-spanning segment. At Tyr149–Asn187 the chain is on the extracellular side. Asn184 is a glycosylation site (N-linked (GlcNAc...) asparagine). Residues Thr188–Ser208 form a helical membrane-spanning segment. Residues Ser209 to Arg481 are Cytoplasmic-facing. The helical transmembrane segment at Ile482 to Pro502 threads the bilayer. An N-linked (GlcNAc...) asparagine glycan is attached at Asn503. At Asn503 to Asn527 the chain is on the extracellular side. A helical membrane pass occupies residues Leu528–Leu548. Residues Ser549–Phe569 lie on the Cytoplasmic side of the membrane. The helical transmembrane segment at Val570 to Ile590 threads the bilayer. Residues Glu591–Cys611 are Extracellular-facing. Residues Ala612 to Leu632 traverse the membrane as a helical segment. Residues Arg633 to Thr660 are Cytoplasmic-facing. The chain crosses the membrane as a helical span at residues Ser661 to Tyr683. Residues Ser684–Leu692 lie on the Extracellular side of the membrane. A helical membrane pass occupies residues Leu693–Tyr713. Residues Asn714–Leu730 are Cytoplasmic-facing. Residues Met731–Phe751 form a helical membrane-spanning segment. Residues Asp752–Gln753 are Extracellular-facing. Residues Tyr754–Ile774 form a helical membrane-spanning segment. Over Ser775–His868 the chain is Cytoplasmic.

This sequence belongs to the CSC1 (TC 1.A.17) family.

The protein localises to the membrane. Its function is as follows. Acts as an osmosensitive calcium-permeable cation channel. Required for spore wall assembly and ascus formation. The polypeptide is Sporulation-specific protein 75 (SPO75) (Saccharomyces cerevisiae (strain ATCC 204508 / S288c) (Baker's yeast)).